A 415-amino-acid chain; its full sequence is Tumor necrosis factor receptor superfamily member 3 (415 aa).

Positions 1-30 (MRLPRASSPCGLAWGPLLLGLSGLLVASQP) are cleaved as a signal peptide. Over 31–223 (QLVPPYRIEN…NPPEPGAMLL (193 aa)) the chain is Extracellular. A glycan (N-linked (GlcNAc...) asparagine) is linked at Asn40. TNFR-Cys repeat units lie at residues 42–81 (TCWDQDKEYYEPMHDVCCSRCPPGEFVFAVCSRSQDTVCK), 82–124 (TCPH…KAEC), 125–170 (RCQP…VNCV), and 171–213 (PCKP…TICK). 10 disulfide bridges follow: Cys43–Cys58, Cys59–Cys72, Cys62–Cys80, Cys83–Cys98, Cys101–Cys116, Cys104–Cys124, Cys126–Cys132, Cys139–Cys150, Cys142–Cys169, and Cys172–Cys187. Asn179 is a glycosylation site (N-linked (GlcNAc...) asparagine). A helical membrane pass occupies residues 224–244 (LAILLSLVLFLLFTTVLACAW). Over 245-415 (MRHPSLCRKL…ETETLGCQDL (171 aa)) the chain is Cytoplasmic. A disordered region spans residues 261-304 (HPEGEESPPCPAPRADPHFPDLAEPLLPMSGDLSPSPAGPPTAP). Ser315 is modified (phosphoserine). The tract at residues 361–399 (LGGTRGPGDPPAPPEPPYPTPEEGAPGPSELSTPYQEDG) is disordered. A compositionally biased stretch (pro residues) spans 368–380 (GDPPAPPEPPYPT).

In terms of assembly, self-associates; dimerization and trimerization are promoted by lymphotoxin (LTA(3)). Associates with TRAF3. Associates with TRAF4. Associates with TRAF5.

The protein localises to the membrane. Its function is as follows. Receptor for the heterotrimeric lymphotoxin containing LTA and LTB, and for TNFS14/LIGHT. Activates NF-kappa-B signaling upon stimulation with lymphotoxin. Promotes apoptosis via TRAF3 and TRAF5. May play a role in the development of lymphoid organs. (Microbial infection) Plays a role in host defense against Zika virus infection. The chain is Tumor necrosis factor receptor superfamily member 3 (Ltbr) from Mus musculus (Mouse).